The sequence spans 299 residues: Pantothenate synthetase (299 aa).

ATP is bound at residue 41–48 (MGALHEGH). His48 acts as the Proton donor in catalysis. Gln72 lines the (R)-pantoate pocket. Residue Gln72 coordinates beta-alanine. ATP is bound at residue 158–161 (GQKD). Residue Gln164 coordinates (R)-pantoate. ATP contacts are provided by residues Val187 and 195–198 (MSSR).

This sequence belongs to the pantothenate synthetase family. Homodimer.

Its subcellular location is the cytoplasm. The enzyme catalyses (R)-pantoate + beta-alanine + ATP = (R)-pantothenate + AMP + diphosphate + H(+). It participates in cofactor biosynthesis; (R)-pantothenate biosynthesis; (R)-pantothenate from (R)-pantoate and beta-alanine: step 1/1. Its function is as follows. Catalyzes the condensation of pantoate with beta-alanine in an ATP-dependent reaction via a pantoyl-adenylate intermediate. The protein is Pantothenate synthetase of Acidobacterium capsulatum (strain ATCC 51196 / DSM 11244 / BCRC 80197 / JCM 7670 / NBRC 15755 / NCIMB 13165 / 161).